Here is a 405-residue protein sequence, read N- to C-terminus: Tyrosine--tRNA ligase (405 aa).

Tyrosine 35 is a binding site for L-tyrosine. Residues 40-49 (TTSSSLHIGH) carry the 'HIGH' region motif. L-tyrosine is bound by residues tyrosine 166 and glutamine 170. The 'KMSKS' region motif lies at 226-230 (KMGKS). Lysine 229 lines the ATP pocket. The 65-residue stretch at 340–404 (ILLIDLMLDS…VGKKKFLRIV (65 aa)) folds into the S4 RNA-binding domain.

The protein belongs to the class-I aminoacyl-tRNA synthetase family. TyrS type 1 subfamily. In terms of assembly, homodimer.

The protein resides in the cytoplasm. It catalyses the reaction tRNA(Tyr) + L-tyrosine + ATP = L-tyrosyl-tRNA(Tyr) + AMP + diphosphate + H(+). Functionally, catalyzes the attachment of tyrosine to tRNA(Tyr) in a two-step reaction: tyrosine is first activated by ATP to form Tyr-AMP and then transferred to the acceptor end of tRNA(Tyr). The protein is Tyrosine--tRNA ligase of Borrelia garinii subsp. bavariensis (strain ATCC BAA-2496 / DSM 23469 / PBi) (Borreliella bavariensis).